The sequence spans 489 residues: Glycogen synthase (489 aa).

Arg-20 lines the ADP-alpha-D-glucose pocket.

Belongs to the glycosyltransferase 1 family. Bacterial/plant glycogen synthase subfamily.

It carries out the reaction [(1-&gt;4)-alpha-D-glucosyl](n) + ADP-alpha-D-glucose = [(1-&gt;4)-alpha-D-glucosyl](n+1) + ADP + H(+). It functions in the pathway glycan biosynthesis; glycogen biosynthesis. Its function is as follows. Synthesizes alpha-1,4-glucan chains using ADP-glucose. This is Glycogen synthase from Chlorobium limicola (strain DSM 245 / NBRC 103803 / 6330).